Consider the following 437-residue polypeptide: GTPase Der (437 aa).

EngA-type G domains follow at residues 3 to 167 and 176 to 352; these read NLVA…NKET and PRFA…ENRT. GTP-binding positions include 9-16, 56-60, 119-122, 182-189, 229-233, and 294-297; these read GRPNVGKS, DTGGW, NKTD, GRPNAGKS, DTAGI, and NKWD. The KH-like domain maps to 353-437; it reads TKIPTARLNE…TPINIYIRQK (85 aa).

Belongs to the TRAFAC class TrmE-Era-EngA-EngB-Septin-like GTPase superfamily. EngA (Der) GTPase family. In terms of assembly, associates with the 50S ribosomal subunit.

Functionally, GTPase that plays an essential role in the late steps of ribosome biogenesis. The sequence is that of GTPase Der from Bacteroides thetaiotaomicron (strain ATCC 29148 / DSM 2079 / JCM 5827 / CCUG 10774 / NCTC 10582 / VPI-5482 / E50).